We begin with the raw amino-acid sequence, 227 residues long: 2,3-bisphosphoglycerate-dependent phosphoglycerate mutase (227 aa).

Substrate contacts are provided by residues 7–14 (RHGQSEWN), 20–21 (TG), R59, 86–89 (ERHY), K97, 113–114 (RR), and 182–183 (GN). The Tele-phosphohistidine intermediate role is filled by H8. E86 serves as the catalytic Proton donor/acceptor.

The protein belongs to the phosphoglycerate mutase family. BPG-dependent PGAM subfamily. In terms of assembly, homodimer.

It catalyses the reaction (2R)-2-phosphoglycerate = (2R)-3-phosphoglycerate. Its pathway is carbohydrate degradation; glycolysis; pyruvate from D-glyceraldehyde 3-phosphate: step 3/5. Catalyzes the interconversion of 2-phosphoglycerate and 3-phosphoglycerate. The protein is 2,3-bisphosphoglycerate-dependent phosphoglycerate mutase of Neisseria meningitidis serogroup C / serotype 2a (strain ATCC 700532 / DSM 15464 / FAM18).